The following is a 62-amino-acid chain: MPKMKTKSALKKRIKITGTGKIMREQAYRSHLSQNKTTKQKRQARKSVQMHSSDVKRFKALI.

The interval 25-62 (EQAYRSHLSQNKTTKQKRQARKSVQMHSSDVKRFKALI) is disordered. Residues 53 to 62 (SDVKRFKALI) are compositionally biased toward basic and acidic residues.

Belongs to the bacterial ribosomal protein bL35 family.

In Mycoplasmopsis fermentans (Mycoplasma fermentans), this protein is Large ribosomal subunit protein bL35.